We begin with the raw amino-acid sequence, 416 residues long: Keratin, type I cuticular Ha1 (416 aa).

Positions 2–56 are head; it reads PYNCCLPALSCRTSCSSRPCVPPSCHGCTLPGACNIPANVGNCNWFCEGSFNGNE. The region spanning 56–367 is the IF rod domain; sequence EKETMQFLND…GLLESEDCKL (312 aa). Positions 57–91 are coil 1A; sequence KETMQFLNDRLASYMEKVRQLERENAELECRIQER. The tract at residues 92–102 is linker 1; sequence NQQQDPLVCPA. The segment at 103–203 is coil 1B; sequence YQAYFRTIEE…HEEEVNTLRC (101 aa). The interval 204–219 is linker 12; sequence QLGDRLNVEVDAAPTV. Residues 220–363 form a coil 2 region; that stretch reads DLNRVLNETR…NTYRGLLESE (144 aa). A tail region spans residues 364 to 416; the sequence is DCKLPCNPCATSNACGKPIGPCVSNPCVPCPPPAPCTPCVPRPRCGPCNSFVR.

The protein belongs to the intermediate filament family.

The sequence is that of Keratin, type I cuticular Ha1 (Krt31) from Mus musculus (Mouse).